We begin with the raw amino-acid sequence, 310 residues long: Tagatose-6-phosphate kinase (310 aa).

It belongs to the carbohydrate kinase PfkB family. LacC subfamily.

The catalysed reaction is D-tagatofuranose 6-phosphate + ATP = D-tagatofuranose 1,6-bisphosphate + ADP + H(+). The protein operates within carbohydrate metabolism; D-tagatose 6-phosphate degradation; D-glyceraldehyde 3-phosphate and glycerone phosphate from D-tagatose 6-phosphate: step 1/2. The polypeptide is Tagatose-6-phosphate kinase (Staphylococcus epidermidis (strain ATCC 35984 / DSM 28319 / BCRC 17069 / CCUG 31568 / BM 3577 / RP62A)).